The primary structure comprises 190 residues: Zinc metalloproteinase/disintegrin (190 aa).

A Peptidase M12B domain is found at 1–11 (NHNPECIVNEP). The 87-residue stretch at 19–105 (PPVCGNELLE…ECPADVFHKN (87 aa)) folds into the Disintegrin domain. 6 residues coordinate Ca(2+): V21, N24, L26, E28, E31, and D34. 6 disulfides stabilise this stretch: C33/C51, C35/C46, C45/C68, C59/C65, C64/C90, and C77/C97. A D/ECD-tripeptide motif is present at residues 83–85 (ECD). Residues D85, P86, E88, D100, and V101 each coordinate Ca(2+). The propeptide occupies 104-190 (KNGQPCLDNY…DNSPGQNGPC (87 aa)).

Belongs to the venom metalloproteinase (M12B) family. P-III subfamily. In terms of assembly, monomer. Requires Zn(2+) as cofactor. As to expression, expressed by the venom gland.

The protein localises to the secreted. Its function is as follows. Impairs hemostasis in the envenomed animal. In terms of biological role, inhibits platelet aggregation induced by ADP, thrombin, platelet-activating factor and collagen. Acts by inhibiting fibrinogen interaction with platelet receptors GPIIb/GPIIIa (ITGA2B/ITGB3). In Gloydius brevicauda (Korean slamosa snake), this protein is Zinc metalloproteinase/disintegrin.